We begin with the raw amino-acid sequence, 561 residues long: uncharacterized protein (561 aa).

2 helical membrane passes run Phe-29 to Ile-49 and Phe-80 to Ile-100.

Its subcellular location is the cell membrane. This is an uncharacterized protein from Mycoplasma pneumoniae (strain ATCC 29342 / M129 / Subtype 1) (Mycoplasmoides pneumoniae).